The chain runs to 548 residues: Protein NRT1/ PTR FAMILY 2.4 (548 aa).

12 helical membrane-spanning segments follow: residues 29 to 49 (TLLG…VFLI), 65 to 85 (IVNG…DSFF), 88 to 108 (IPVI…LTLI), 136 to 156 (ILYA…FILA), 172 to 192 (FFNW…TAIV), 200 to 220 (WKLG…IFVA), 316 to 336 (LVPL…QMSM), 354 to 374 (VSAG…IILN), 393 to 413 (LQKV…SAVV), 429 to 449 (VLWL…HFPA), 468 to 488 (SLTS…IDVI), and 508 to 528 (YLVL…CSWF).

It belongs to the major facilitator superfamily. Proton-dependent oligopeptide transporter (POT/PTR) (TC 2.A.17) family. Strongly expressed in the root stele.

It is found in the membrane. Its function is as follows. Transporter involved in a passive nitrate efflux. This chain is Protein NRT1/ PTR FAMILY 2.4 (NPF2.4), found in Arabidopsis thaliana (Mouse-ear cress).